Consider the following 417-residue polypeptide: MYRPRSMVSPSRFFNPFMVALIVIITVGLLAMTAGLLIHFLAFDKRAYFYHSNFHILNVDYTEALNSPATHEYRTLSERIESMITDAFRESNLRSEFIRTHVVKLRKEGSGVVADVVMKFRSSKRNNKKAIKTRIQSVLQRLSSSGNLEIAPSNGITSLTDQDTENVLTQECGARPDLITLSEERIIGGTQAETGDWPWQVSLQLNNVHHCGGTLISNLWVLTAAHCFRSYSNPQQWTATFGVSTISPRLRVRVRAILAHAEYNSITRDNDIAVVQLDRPVTFTRNIHRVCLPAATQNIMPDSVAYVTGWGSLTYGGNTVTNLQQGEVRIVSSEVCNEPAGYGGSVLPGMLCAGVRSGAVDACQGDSGGPLVQEDTRRLWFVVGIVSWGYQCGLPNKPGVYTRVTAYRNWIRQQTGI.

Residues 1–17 (MYRPRSMVSPSRFFNPF) lie on the Cytoplasmic side of the membrane. A helical; Signal-anchor for type II membrane protein membrane pass occupies residues 18 to 38 (MVALIVIITVGLLAMTAGLLI). Over 39–417 (HFLAFDKRAY…RNWIRQQTGI (379 aa)) the chain is Extracellular. The 117-residue stretch at 46–162 (RAYFYHSNFH…SNGITSLTDQ (117 aa)) folds into the SEA domain. 4 disulfides stabilise this stretch: cysteine 172/cysteine 291, cysteine 211/cysteine 227, cysteine 336/cysteine 352, and cysteine 363/cysteine 392. Residues 186-416 (IIGGTQAETG…YRNWIRQQTG (231 aa)) enclose the Peptidase S1 domain. Residues histidine 226 and aspartate 271 each act as charge relay system in the active site. Serine 367 serves as the catalytic Charge relay system.

The protein belongs to the peptidase S1 family. As to quaternary structure, monomer. Isoform 1 and isoform 2 are expressed in the esophagus, tongue and trachea. Isoform 2 is also highly expressed in the adrenal cortex and heart.

It is found in the cell membrane. It localises to the secreted. Functionally, may play some biological role in the host defense system on the mucous membrane independently of or in cooperation with other substances in airway mucous or bronchial secretions. Plays a role in the proteolytic processing of ACE2. Preferentially cleaves the C-terminal side of arginine residues at the P1 position of certain peptides. Isoform 2 may play a key role in regulating adrenal proliferation by specifically cleaving N-POMC. This is Transmembrane protease serine 11D (Tmprss11d) from Rattus norvegicus (Rat).